A 184-amino-acid polypeptide reads, in one-letter code: Inosine triphosphate pyrophosphatase (184 aa).

Residue threonine 10–lysine 15 coordinates ITP. Glutamate 37 serves as a coordination point for Mg(2+). ITP is bound by residues lysine 49, aspartate 65–threonine 66, lysine 82, phenylalanine 141–aspartate 144, lysine 164, and histidine 169–arginine 170.

Belongs to the HAM1 NTPase family. As to quaternary structure, homodimer. The cofactor is Mg(2+). Mn(2+) serves as cofactor.

The protein resides in the cytoplasm. It catalyses the reaction ITP + H2O = IMP + diphosphate + H(+). It carries out the reaction dITP + H2O = dIMP + diphosphate + H(+). The catalysed reaction is XTP + H2O = XMP + diphosphate + H(+). Functionally, pyrophosphatase that hydrolyzes non-canonical purine nucleotides such as inosine triphosphate (ITP), deoxyinosine triphosphate (dITP) or xanthosine 5'-triphosphate (XTP) to their respective monophosphate derivatives. The enzyme does not distinguish between the deoxy- and ribose forms. Probably excludes non-canonical purines from RNA and DNA precursor pools, thus preventing their incorporation into RNA and DNA and avoiding chromosomal lesions. The polypeptide is Inosine triphosphate pyrophosphatase (Caenorhabditis elegans).